The following is a 382-amino-acid chain: Norsolorinic acid reductase B (382 aa).

D64 lines the NADP(+) pocket. The active-site Proton donor is the Y69. H143 contributes to the substrate binding site. NADP(+)-binding positions include 173-174 (SD), Q199, 228-238 (GVLNQGRFRTE), and 302-310 (RKVDHLTGV).

This sequence belongs to the aldo/keto reductase family. Aldo/keto reductase 2 subfamily.

It functions in the pathway mycotoxin biosynthesis; aflatoxin biosynthesis. Norsolorinic acid reductase; part of the gene cluster that mediates the biosynthesis of aflatoxins, a group of polyketide-derived furanocoumarins, and part of the most toxic and carcinogenic compounds among the known mycotoxins. The four major aflatoxins produced by A.parasiticus are aflatoxin B1 (AFB1), aflatoxin B2 (AFB2), aflatoxin G1 (AFG1) and aflatoxin G2 (AFG2). Within the aflatoxin pathway, the norsolorinic acid reductase aflE may play a role in the conversion of norsolorinic acid (NOR) to averantin (AVN). The biosynthesis of aflatoxins begins with the norsolorinic acid synthase aflC that combines a hexanoyl starter unit produced by the fatty acid synthase aflA/aflB and 7 malonyl-CoA extender units to synthesize the precursor NOR. The second step is the conversion of NOR to averantin and requires the norsolorinic acid ketoreductase aflD, which catalyzes the dehydration of norsolorinic acid to form (1'S)-averantin. The norsolorinic acid reductases aflE and aflF may also play a role in the conversion of NOR to AVN. The cytochrome P450 monooxygenase aflG then catalyzes the hydroxylation of AVN to 5'hydroxyaverantin (HAVN). The next step is performed by the 5'-hydroxyaverantin dehydrogenase aflH that transforms HAVN to 5'-oxoaverantin (OAVN) which is further converted to averufin (AVF) by aflK that plays a dual role in the pathway, as a 5'-oxoaverantin cyclase that mediates conversion of 5'-oxoaverantin, as well as a versicolorin B synthase in a later step in the pathway. The averufin oxidase aflI catalyzes the conversion of AVF to versiconal hemiacetal acetate (VHA). VHA is then the substrate for the versiconal hemiacetal acetate esterase aflJ to yield versiconal (VAL). Versicolorin B synthase aflK then converts VAL to versicolorin B (VERB) by closing the bisfuran ring of aflatoxin which is required for DNA-binding, thus giving to aflatoxin its activity as a mutagen. Then, the activity of the versicolorin B desaturase aflL leads to versicolorin A (VERA). A branch point starts from VERB since it can also be converted to dihydrodemethylsterigmatocystin (DMDHST), probably also by aflL, VERA being a precursor for aflatoxins B1 and G1, and DMDHST for aflatoxins B2 and G2. Next, the versicolorin reductase aflM and the cytochrome P450 monooxygenase aflN are involved in conversion of VERA to demethylsterigmatocystin (DMST). AflX and aflY seem also involved in this step, through probable aflX-mediated epoxide ring-opening step following versicolorin A oxidation and aflY-mediated Baeyer-Villiger oxidation required for the formation of the xanthone ring. The methyltransferase aflO then leads to the modification of DMST to sterigmatocystin (ST), and of DMDHST to dihydrosterigmatocystin (DHST). Both ST and DHST are then substrates of the O-methyltransferase aflP to yield O-methylsterigmatocystin (OMST) and dihydro-O-methylsterigmatocystin (DHOMST), respectively. Finally OMST is converted to aflatoxins B1 and G1, and DHOMST to aflatoxins B2 and G2, via the action of several enzymes including O-methylsterigmatocystin oxidoreductase aflQ, the cytochrome P450 monooxygenase aflU, but also the NADH-dependent flavin oxidoreductase nadA which is specifically required for the synthesis of AFG1. The polypeptide is Norsolorinic acid reductase B (Aspergillus parasiticus (strain ATCC 56775 / NRRL 5862 / SRRC 143 / SU-1)).